The following is a 967-amino-acid chain: Glutamate receptor 2.6 (967 aa).

An N-terminal signal peptide occupies residues 1-31; sequence MSLFNHLLSRALPLWLLFFINFLVLLGKSQQ. Residues 32-590 are Extracellular-facing; the sequence is EVLQVQVGIV…WVFLKPLTRE (559 aa). N-linked (GlcNAc...) asparagine glycans are attached at residues N45, N57, N121, N336, N345, N424, and N550. Residues 591 to 611 form a helical membrane-spanning segment; that stretch reads LWFLTAASFLYIGIMVWIFEY. Over 612-621 the chain is Cytoplasmic; that stretch reads QASGDFRKQS. A helical transmembrane segment spans residues 622–642; it reads IINKISNVFYFSFSTLFFAHM. Over 643–651 the chain is Cytoplasmic; it reads RPSESIFTR. A helical transmembrane segment spans residues 652-672; that stretch reads VLVVVWCFVLLILTQSYTATL. The Extracellular portion of the chain corresponds to 673-832; that stretch reads TSMLTVQELR…DSPIRLDHHS (160 aa). A glycan (N-linked (GlcNAc...) asparagine) is linked at N795. Residues 833–853 form a helical membrane-spanning segment; it reads FEALFTIVFVVSMLLLLAMLV. The Cytoplasmic segment spans residues 854–967; it reads CRRYRQESKS…AALFSRIKSA (114 aa). The segment covering 864–874 has biased composition (polar residues); sequence GEINANNSPTD. The interval 864-913 is disordered; that stretch reads GEINANNSPTDGNMRAPPNQPTDDNMRAPTSPPIDDQVLEPPGPALNEAD.

It belongs to the glutamate-gated ion channel (TC 1.A.10.1) family. As to quaternary structure, may form heteromers. As to expression, expressed predominantly in roots.

It localises to the membrane. Functionally, glutamate-gated receptor that probably acts as a non-selective cation channel. May be involved in light-signal transduction and calcium homeostasis via the regulation of calcium influx into cells. The protein is Glutamate receptor 2.6 (GLR2.6) of Arabidopsis thaliana (Mouse-ear cress).